The chain runs to 255 residues: MASREHLLLDPAALAVSWADPAAVEIPPELLAALGEYLSARRSDGEAEADAEAEADDEFMMYEFKVRRCARARSHDWTACPYAHPGEAARRRDPRRVAYTGEPCPDFRRRPGAACPRGSTCPFAHGTFELWLHPSRYRTRPCRAGVACRRRVCFFAHTAGELRAGSKEDSPLSLSPKSTLASLWESPPVSPVEGRRWVDGIDECDADAEMEELMFAMRELGLRKVRPSASSVTPVLPPVTDEDGPDFGWVSELVM.

2 consecutive C3H1-type zinc fingers follow at residues 98–128 (AYTGEPCPDFRRRPGAACPRGSTCPFAHGTF) and 137–159 (YRTRPCRAGVACRRRVCFFAHTA).

The polypeptide is Zinc finger CCCH domain-containing protein 37 (Oryza sativa subsp. japonica (Rice)).